The following is a 218-amino-acid chain: MSSKRTSPNGKQRLLNFLRGLLEDDSHSDLITWSNKDTLEFQMLKPHKVAELWGAATGNPGMNYDKMSRGLRYFYTNNTLKKVKGKDSRYCFLDTPLLAPFPDFFPKANEPMRRVPLFSIENLLASSEETTSNFSLQSSPSSSSNSSSARTMSATSSPTSSLEDVINPPVLIDPFQMQMAHITQTFLATQLPALQAFPMQLQLQFLKTLLPTLFPNNN.

Residues 12–93 constitute a DNA-binding region (ETS); the sequence is QRLLNFLRGL…KGKDSRYCFL (82 aa). Over residues 131-161 the composition is skewed to low complexity; the sequence is TSNFSLQSSPSSSSNSSSARTMSATSSPTSS. Residues 131 to 162 are disordered; it reads TSNFSLQSSPSSSSNSSSARTMSATSSPTSSL.

The protein belongs to the ETS family.

The protein localises to the nucleus. Its function is as follows. Probable transcription factor. Involved in responses to oxidative stress. The sequence is that of ETS domain-containing protein ets-7 from Caenorhabditis elegans.